A 247-amino-acid chain; its full sequence is 2,3-bisphosphoglycerate-dependent phosphoglycerate mutase (247 aa).

Residues 8 to 15 (RHGQSLWN), 21 to 22 (TG), Arg60, 87 to 90 (ERHY), Lys98, 114 to 115 (RR), and 183 to 184 (GN) contribute to the substrate site. Catalysis depends on His9, which acts as the Tele-phosphohistidine intermediate. Catalysis depends on Glu87, which acts as the Proton donor/acceptor.

Belongs to the phosphoglycerate mutase family. BPG-dependent PGAM subfamily.

The catalysed reaction is (2R)-2-phosphoglycerate = (2R)-3-phosphoglycerate. The protein operates within carbohydrate degradation; glycolysis; pyruvate from D-glyceraldehyde 3-phosphate: step 3/5. Its function is as follows. Catalyzes the interconversion of 2-phosphoglycerate and 3-phosphoglycerate. The chain is 2,3-bisphosphoglycerate-dependent phosphoglycerate mutase from Hydrogenobaculum sp. (strain Y04AAS1).